Consider the following 466-residue polypeptide: Polycomb group protein FIE1 (466 aa).

A compositionally biased stretch (basic residues) spans 1-10; the sequence is MGPTSRNHKS. The interval 1–71 is disordered; that stretch reads MGPTSRNHKS…GEGEPQETVL (71 aa). Residues 31 to 49 are compositionally biased toward low complexity; the sequence is SITASASASAFASPAVANS. 6 WD repeats span residues 167 to 209, 212 to 252, 258 to 298, 324 to 361, 374 to 414, and 421 to 460; these read DMNE…IYKS, GHGG…LILV, GHRH…EYVE, IHSN…ENPG, PECN…PVLI, and QVKS…TAPV.

It belongs to the WD repeat ESC family. In terms of assembly, interacts with EZ1 and CLF. Component of the polycomb repressive complex 2 (PRC2), which methylates 'Lys-27' residues of histone H3 (H3K27me3), leading to transcriptional repression of the affected target gene. As to expression, expressed specifically in seed endosperm.

In terms of biological role, polycomb group (PcG) protein. PcG proteins act by forming multiprotein complexes, which are required to maintain the transcriptionally repressive state of homeotic genes throughout development. PcG proteins are not required to initiate repression, but to maintain it during later stages of development. They act via the methylation of histones, rendering chromatin heritably changed in its expressibility. Together with EZ1 and CLF forms a complex that is involved in gene transcriptional repression by trimethylation on histone H3 'Lys-27' (H3K27me3) of target genes. Involved in the regulation of embryo and seed endosperm development. FIE1-containing PcG complex in seed endosperm regulates the expression of various transcription factors by trimethylation on histone H3 'Lys-27' (H3K27me3) of target genes. Involved in the overall expression regulation of nutrient metabolism genes, such as prolamin synthesis and seed storage protein synthesis genes. Can regulate valine, leucine and isoleucine metabolism-related genes. The protein is Polycomb group protein FIE1 of Oryza sativa subsp. japonica (Rice).